A 95-amino-acid chain; its full sequence is Large ribosomal subunit protein bL25 (95 aa).

This sequence belongs to the bacterial ribosomal protein bL25 family. As to quaternary structure, part of the 50S ribosomal subunit; part of the 5S rRNA/L5/L18/L25 subcomplex. Contacts the 5S rRNA. Binds to the 5S rRNA independently of L5 and L18.

Functionally, this is one of the proteins that binds to the 5S RNA in the ribosome where it forms part of the central protuberance. The sequence is that of Large ribosomal subunit protein bL25 from Shewanella loihica (strain ATCC BAA-1088 / PV-4).